We begin with the raw amino-acid sequence, 270 residues long: Hydroxyethylthiazole kinase (270 aa).

M46 is a substrate binding site. R120 and T166 together coordinate ATP. G193 serves as a coordination point for substrate.

It belongs to the Thz kinase family. Requires Mg(2+) as cofactor.

It carries out the reaction 5-(2-hydroxyethyl)-4-methylthiazole + ATP = 4-methyl-5-(2-phosphooxyethyl)-thiazole + ADP + H(+). It participates in cofactor biosynthesis; thiamine diphosphate biosynthesis; 4-methyl-5-(2-phosphoethyl)-thiazole from 5-(2-hydroxyethyl)-4-methylthiazole: step 1/1. Functionally, catalyzes the phosphorylation of the hydroxyl group of 4-methyl-5-beta-hydroxyethylthiazole (THZ). This chain is Hydroxyethylthiazole kinase, found in Herpetosiphon aurantiacus (strain ATCC 23779 / DSM 785 / 114-95).